The following is a 320-amino-acid chain: MVGYDPKPDGRNNTKFQVAVAGSVSGLVTRALISPFDVIKIRFQLQHERLSRSDPSAKYHGILQASRQILQEEGPTAFWKGHVPAQILSIGYGAVQFLSFEMLTELVHRGSVYDAREFSVHFVCGGLAACMATLTVHPVDVLRTRFAAQGEPKVYNTLRHAVGTMYRSEGPQVFYKGLAPTLIAIFPYAGLQFSCYSSLKHLYKWAIPAEGKKNENLQNLLCGSGAGVISKTLTYPLDLFKKRLQVGGFEHARAAFGQVRRYKGLMDCAKQVLQKEGALGFFKGLSPSLLKAALSTGFMFFSYEFFCNVFHCMNRTASQR.

Solcar repeat units lie at residues 13–106 (NTKF…LTEL), 116–202 (REFS…LKHL), and 214–309 (NENL…FCNV). A helical membrane pass occupies residues 19-39 (AVAGSVSGLVTRALISPFDVI). S51 carries the phosphoserine modification. Helical transmembrane passes span 87–107 (ILSIGYGAVQFLSFEMLTELV), 122–142 (FVCGGLAACMATLTVHPVDVL), 173–193 (VFYKGLAPTLIAIFPYAGLQF), and 220–240 (LLCGSGAGVISKTLTYPLDLF). The short motif at 241-246 (KKRLQV) is the Substrate recognition element. A helical membrane pass occupies residues 293–313 (ALSTGFMFFSYEFFCNVFHCM).

The protein belongs to the mitochondrial carrier (TC 2.A.29) family. As to expression, expressed in all tissues examined except for placenta. Highest levels in colon, kidney, lung, testis, spleen, and brain.

It is found in the mitochondrion membrane. The enzyme catalyses thiamine phosphate(out) + thiamine diphosphate(in) = thiamine phosphate(in) + thiamine diphosphate(out). Mitochondrial transporter mediating uptake of thiamine diphosphate into mitochondria. It is not clear if the antiporter activity is affected by the membrane potential or by the proton electrochemical gradient. The polypeptide is Mitochondrial thiamine pyrophosphate carrier (Homo sapiens (Human)).